Reading from the N-terminus, the 261-residue chain is Thioredoxin-like protein HCF164, chloroplastic (261 aa).

The N-terminal 40 residues, 1-40 (MARLVFSLNLPSSHGFNLSPRNLQSFFVTQTGAPRFRAVR), are a transit peptide targeting the chloroplast. The tract at residues 39–91 (VRCKPNPESSETKQEKLVIDNGETSSASKEVESSSSVADSSSSSSSGFPESPN) is disordered. Over residues 63-84 (SSASKEVESSSSVADSSSSSSS) the composition is skewed to low complexity. Residues 101–229 (VTVIAALSLF…LVENVNALAA (129 aa)) form the Thioredoxin domain. Catalysis depends on nucleophile residues cysteine 150 and cysteine 153. The cysteines at positions 150 and 153 are disulfide-linked.

It belongs to the thioredoxin family. As to quaternary structure, interacts in vitro with LTO1.

It localises to the plastid. The protein resides in the chloroplast thylakoid membrane. Thiol-disulfide oxidoreductase that participates in various redox reactions in the chloroplast. Mediates the reduction of PSI-N in the thylakoid lumen. May interact and probably reduce other target proteins of the thylakoid membrane, such as FTSH2, FTSH8, LHCB5, atpA, atpB, atpE, petA and petC. Involved in the biogenesis of the plastid cytochrome b6f complex. Reducing equivalents are provided by stromal M-type thioredoxins and probably transduced through the thylakoid membrane by CCDA. Possesses low insulin disulfide bonds reducing activity. The chain is Thioredoxin-like protein HCF164, chloroplastic from Arabidopsis thaliana (Mouse-ear cress).